A 999-amino-acid chain; its full sequence is Sarcoplasmic/endoplasmic reticulum calcium ATPase 3 (999 aa).

N-acetylmethionine is present on methionine 1. The Cytoplasmic segment spans residues 1 to 48; the sequence is MEEAHLLPAADVLRRFSVTAEGGLSPAQVTRARERYGPNELPTEEGKS. A Phosphoserine modification is found at serine 17. Phosphothreonine is present on threonine 19. Serine 25 carries the phosphoserine modification. Residues 49–69 form a helical membrane-spanning segment; sequence LWELVLEQFEDLLVRILLLAA. Topologically, residues 70 to 89 are extracellular; sequence LVSFVLACFEEGEETTTAFV. A helical transmembrane segment spans residues 90 to 110; the sequence is EPLVIVLILVANAVVGVWQER. The Cytoplasmic segment spans residues 111-253; sequence NAENAIEALK…PERTPLQQKL (143 aa). Residues 254–273 traverse the membrane as a helical segment; that stretch reads DEFGRQLSRAISVICMAVWV. At 274-295 the chain is on the extracellular side; sequence INIGHFADPAHGGSWLRGAVYY. Residues 296 to 313 form a helical membrane-spanning segment; that stretch reads FKIAVALAVAAIPEGLPA. Positions 304, 305, 307, and 309 each coordinate Ca(2+). Over 314–757 the chain is Cytoplasmic; it reads VITTCLALGT…EEGRAIYSNM (444 aa). Aspartate 351 functions as the 4-aspartylphosphate intermediate in the catalytic mechanism. Mg(2+)-binding residues include aspartate 351 and threonine 353. Threonine 353 contacts ATP. Residues 370–400 are interaction with phospholamban 1; it reads AEAEAGTCRLHEFTISGTTYAPEGEVRQGEQ. The residue at position 415 (threonine 415) is a Phosphothreonine. 7 residues coordinate ATP: glutamate 442, arginine 489, lysine 515, arginine 560, threonine 625, glycine 626, and aspartate 627. Serine 662 is subject to Phosphoserine. Residues arginine 678 and lysine 684 each coordinate ATP. Aspartate 703 is a Mg(2+) binding site. Asparagine 706 lines the ATP pocket. The helical transmembrane segment at 758–777 threads the bilayer; the sequence is KQFIRYLISSNVGEVVCIFL. Ca(2+) contacts are provided by asparagine 768 and glutamate 771. At 778–787 the chain is on the extracellular side; the sequence is TAILGLPEAL. The helical transmembrane segment at 788–808 threads the bilayer; sequence IPVQLLWVNLVTDGLPATALG. Positions 788 to 808 are interaction with phospholamban 2; sequence IPVQLLWVNLVTDGLPATALG. Positions 796, 799, and 800 each coordinate Ca(2+). The Cytoplasmic segment spans residues 809 to 828; that stretch reads FNPPDLDIMEKRPRNPREAL. The chain crosses the membrane as a helical span at residues 829-851; that stretch reads ISGWLFFRYLAIGVYVGLATVAA. Topologically, residues 852 to 897 are extracellular; sequence ATWWFLYDAEGPQVTFYQLRNFLKCSEDNPLFTGTDCEVFESRFPT. The cysteines at positions 876 and 888 are disulfide-linked. A helical membrane pass occupies residues 898 to 917; that stretch reads TMALSVLVTTEMCNALNSVS. Glutamate 908 provides a ligand contact to Ca(2+). Residues 918–930 lie on the Cytoplasmic side of the membrane; the sequence is ENQSLLRMPPWLN. A helical membrane pass occupies residues 931 to 949; that stretch reads PWLLAAVAMSMALHFLILL. Over 950 to 964 the chain is Extracellular; the sequence is VPPLPLIFQVTPLSG. A helical membrane pass occupies residues 965–985; that stretch reads RQWVVVLQISLPVILLDEALK. At 986 to 999 the chain is on the cytoplasmic side; the sequence is YLSRKHVDEEKGRQ.

The protein belongs to the cation transport ATPase (P-type) (TC 3.A.3) family. Type IIA subfamily. As to quaternary structure, interacts with sarcolipin (SLN). Interacts with phospholamban (PLN). Interacts with myoregulin (MRLN). Interacts with DWORF. Interacts with VMP1. Interacts with TUNAR; the interaction occurs at low levels in low glucose conditions and is increased by high glucose levels. It depends on Mg(2+) as a cofactor. In terms of tissue distribution, expressed in endothelial tissues.

It localises to the endoplasmic reticulum membrane. Its subcellular location is the sarcoplasmic reticulum membrane. It catalyses the reaction Ca(2+)(in) + ATP + H2O = Ca(2+)(out) + ADP + phosphate + H(+). Inhibited by sarcolipin (SLN), phospholamban (PLN) and myoregulin (MRLN). Enhanced by DWORF; DWORF increases activity by displacing sarcolipin (SLN), phospholamban (PLN) and myoregulin (MRLN). This magnesium-dependent enzyme catalyzes the hydrolysis of ATP coupled with the transport of calcium. Transports calcium ions from the cytosol into the sarcoplasmic/endoplasmic reticulum lumen. Contributes to calcium sequestration involved in muscular excitation/contraction. In Sus scrofa (Pig), this protein is Sarcoplasmic/endoplasmic reticulum calcium ATPase 3 (ATP2A3).